Here is a 93-residue protein sequence, read N- to C-terminus: uncharacterized protein (93 aa).

This is an uncharacterized protein from Enterobacter agglomerans (Erwinia herbicola).